Reading from the N-terminus, the 70-residue chain is Protein SlyX homolog (70 aa).

Belongs to the SlyX family.

This chain is Protein SlyX homolog, found in Nitrobacter winogradskyi (strain ATCC 25391 / DSM 10237 / CIP 104748 / NCIMB 11846 / Nb-255).